The sequence spans 382 residues: 1-deoxy-D-xylulose 5-phosphate reductoisomerase (382 aa).

Thr-10, Gly-11, Ser-12, Ile-13, Gly-36, and Asn-122 together coordinate NADPH. Lys-123 contacts 1-deoxy-D-xylulose 5-phosphate. NADPH is bound at residue Glu-124. Position 148 (Asp-148) interacts with Mn(2+). 4 residues coordinate 1-deoxy-D-xylulose 5-phosphate: Ser-149, Glu-150, Ser-174, and His-197. Mn(2+) is bound at residue Glu-150. Position 203 (Gly-203) interacts with NADPH. The 1-deoxy-D-xylulose 5-phosphate site is built by Ser-210, Asn-215, Lys-216, and Glu-219. A Mn(2+)-binding site is contributed by Glu-219.

This sequence belongs to the DXR family. Mg(2+) is required as a cofactor. Mn(2+) serves as cofactor.

The enzyme catalyses 2-C-methyl-D-erythritol 4-phosphate + NADP(+) = 1-deoxy-D-xylulose 5-phosphate + NADPH + H(+). The protein operates within isoprenoid biosynthesis; isopentenyl diphosphate biosynthesis via DXP pathway; isopentenyl diphosphate from 1-deoxy-D-xylulose 5-phosphate: step 1/6. Its function is as follows. Catalyzes the NADPH-dependent rearrangement and reduction of 1-deoxy-D-xylulose-5-phosphate (DXP) to 2-C-methyl-D-erythritol 4-phosphate (MEP). The polypeptide is 1-deoxy-D-xylulose 5-phosphate reductoisomerase (Chlorobaculum tepidum (strain ATCC 49652 / DSM 12025 / NBRC 103806 / TLS) (Chlorobium tepidum)).